Reading from the N-terminus, the 459-residue chain is Argininosuccinate lyase (459 aa).

This sequence belongs to the lyase 1 family. Argininosuccinate lyase subfamily.

The protein localises to the cytoplasm. The catalysed reaction is 2-(N(omega)-L-arginino)succinate = fumarate + L-arginine. It participates in amino-acid biosynthesis; L-arginine biosynthesis; L-arginine from L-ornithine and carbamoyl phosphate: step 3/3. The protein is Argininosuccinate lyase of Methylobacterium radiotolerans (strain ATCC 27329 / DSM 1819 / JCM 2831 / NBRC 15690 / NCIMB 10815 / 0-1).